The following is a 1022-amino-acid chain: Antigenic heat-stable 120 kDa protein (1022 aa).

The segment at 1-33 is disordered; sequence MSKNGNQDISEFDPLNREFTEAEKQQQMQQEQE. Residues 14-24 show a composition bias toward basic and acidic residues; that stretch reads PLNREFTEAEK.

It is found in the cytoplasm. The protein is Antigenic heat-stable 120 kDa protein (sca4) of Rickettsia prowazekii (strain Madrid E).